The chain runs to 574 residues: MALLWLLSVFLLVPGTQGAKDGDMRLVNGASASEGRVEIFYRGRWGTVCDNLWNLLDAHVVCRALGYENATQALSRAAFGPGKGPIMLDEVECTGNESSLANCSSLGWMVSHCGHEKDAGVVCSNDSRGIHILDLSGELPDALGQIFDSQQDCDLFIQVTGQGHGDLSLCAHTLILRTNPEAQALWQVVGSSVIMRVDAECMPVVRDFLRYFYSRRIEVSMSSVKCLHKLASAYGATELQGYCGRLFVTLLPQDPTFHTPLELYEYAQATGDSVLEDLCVQFLAWNFEPLTQAEAWLSVPNALIQALLPKSELAVSSELDLLKAVDQWSTATGASHGDVERLVEQIRFPMMLPQELFELQFNLSLYQGHQALFQRKTMEALEFHTVPLKVLAKYRSLNLTEDVYKPRLYTSSTWSSLLMAGAWSTQSYKYRQFYTYNYGSQSRYSSYQNFQTPQHPSFLFKDKLISWSATYLPTIQSCWNYGFSCTSDELPVLGLTTSSYSDPTIGYENKALILCGGYSVVDVTTFIGSKAPIPGTQETNSSKTPSLFPCASGAFSSFRVVIRPFYLTNSTDTE.

The signal sequence occupies residues 1-18 (MALLWLLSVFLLVPGTQG). In terms of domain architecture, SRCR spans 24 to 124 (MRLVNGASAS…HEKDAGVVCS (101 aa)). 3 cysteine pairs are disulfide-bonded: Cys-49–Cys-113, Cys-62–Cys-123, and Cys-93–Cys-103. Asn-69, Asn-96, Asn-102, and Asn-125 each carry an N-linked (GlcNAc...) asparagine glycan. The BTB domain occupies 153 to 221 (CDLFIQVTGQ…FYSRRIEVSM (69 aa)). Positions 260-360 (PLELYEYAQA…MLPQELFELQ (101 aa)) constitute a BACK domain. N-linked (GlcNAc...) asparagine glycans are attached at residues Asn-362, Asn-398, Asn-540, and Asn-569.

In terms of assembly, homodimers and homomultimers. The multimers form ring-like structures with a diameter of 30-40 nm. Binds LGALS1 and LGALS3. Binds ITGB1, COL4A1, COL5A1, COL6A1, FN1 and NID. The unglycosylated form interacts with PDE4DIP; this interaction, which is PDE4DIP isoform-specific, may connect a pericentrosomal complex to the gamma-tubulin ring complex (gamma-TuRC) to promote microtubule assembly and acetylation. As to expression, detected in thyroid (at protein level).

The protein resides in the secreted. Its subcellular location is the extracellular space. The protein localises to the extracellular matrix. Functionally, promotes integrin-mediated cell adhesion. May stimulate host defense against viruses and tumor cells. The protein is Galectin-3-binding protein (Lgals3bp) of Rattus norvegicus (Rat).